Consider the following 238-residue polypeptide: Ribonuclease 3 (238 aa).

One can recognise an RNase III domain in the interval 11 to 136 (RARLEAAIGY…LIAAIYLDGG (126 aa)). Glu49 provides a ligand contact to Mg(2+). Residue Asp53 is part of the active site. The Mg(2+) site is built by Asp122 and Glu125. Glu125 is a catalytic residue. Residues 161–230 (DAKTELQEWA…AMKLLEREGV (70 aa)) enclose the DRBM domain.

This sequence belongs to the ribonuclease III family. Homodimer. Mg(2+) serves as cofactor.

The protein resides in the cytoplasm. It carries out the reaction Endonucleolytic cleavage to 5'-phosphomonoester.. Digests double-stranded RNA. Involved in the processing of primary rRNA transcript to yield the immediate precursors to the large and small rRNAs (23S and 16S). Processes some mRNAs, and tRNAs when they are encoded in the rRNA operon. Processes pre-crRNA and tracrRNA of type II CRISPR loci if present in the organism. This Rhizobium meliloti (strain 1021) (Ensifer meliloti) protein is Ribonuclease 3.